The primary structure comprises 352 residues: Peptide chain release factor 1 (352 aa).

An N5-methylglutamine modification is found at Gln-229.

It belongs to the prokaryotic/mitochondrial release factor family. In terms of processing, methylated by PrmC. Methylation increases the termination efficiency of RF1.

Its subcellular location is the cytoplasm. Its function is as follows. Peptide chain release factor 1 directs the termination of translation in response to the peptide chain termination codons UAG and UAA. The protein is Peptide chain release factor 1 of Gluconacetobacter diazotrophicus (strain ATCC 49037 / DSM 5601 / CCUG 37298 / CIP 103539 / LMG 7603 / PAl5).